The primary structure comprises 826 residues: Beta-galactosidase 7 (826 aa).

The signal sequence occupies residues 1-25; sequence MKMKHFTRLLSLFFILITSLSLAKS. N-linked (GlcNAc...) asparagine glycosylation occurs at Asn154. Catalysis depends on Glu184, which acts as the Proton donor. Glu253 serves as the catalytic Nucleophile. Residues Asn254, Asn351, Asn380, Asn491, Asn665, Asn706, Asn797, and Asn801 are each glycosylated (N-linked (GlcNAc...) asparagine). An SUEL-type lectin domain is found at 740-826; sequence AHEHNKVELS…PKKLAVELEC (87 aa).

It belongs to the glycosyl hydrolase 35 family. As to expression, expressed in flowers.

The protein localises to the secreted. It is found in the extracellular space. It localises to the apoplast. The enzyme catalyses Hydrolysis of terminal non-reducing beta-D-galactose residues in beta-D-galactosides.. The sequence is that of Beta-galactosidase 7 (BGAL7) from Arabidopsis thaliana (Mouse-ear cress).